A 505-amino-acid chain; its full sequence is AMP phosphorylase (505 aa).

AMP is bound by residues G170, 196 to 201, and T205; that span reads SRAITS. The active-site Proton donor is D258. Positions 266 and 290 each coordinate AMP.

This sequence belongs to the thymidine/pyrimidine-nucleoside phosphorylase family. Type 2 subfamily.

It carries out the reaction AMP + phosphate = alpha-D-ribose 1,5-bisphosphate + adenine. The enzyme catalyses CMP + phosphate = cytosine + alpha-D-ribose 1,5-bisphosphate. The catalysed reaction is UMP + phosphate = alpha-D-ribose 1,5-bisphosphate + uracil. Functionally, catalyzes the conversion of AMP and phosphate to adenine and ribose 1,5-bisphosphate (R15P). Exhibits phosphorylase activity toward CMP and UMP in addition to AMP. Functions in an archaeal AMP degradation pathway, together with R15P isomerase and RubisCO. This Methanococcus maripaludis (strain C6 / ATCC BAA-1332) protein is AMP phosphorylase.